The following is a 199-amino-acid chain: Putative ATP-dependent Clp protease proteolytic subunit-like (199 aa).

This sequence belongs to the peptidase S14 family. As to quaternary structure, component of the chloroplastic Clp protease core complex.

Its subcellular location is the plastid. The protein localises to the cyanelle. Its function is as follows. Has lost the two conserved residues (Ser and His) proposed to be part of the active site. Therefore it could be inactive. In Cyanophora paradoxa, this protein is Putative ATP-dependent Clp protease proteolytic subunit-like (clpP-B).